A 63-amino-acid chain; its full sequence is Small ribosomal subunit protein bS21 (63 aa).

The protein belongs to the bacterial ribosomal protein bS21 family.

The polypeptide is Small ribosomal subunit protein bS21 (Syntrophus aciditrophicus (strain SB)).